Reading from the N-terminus, the 712-residue chain is Saccharolysin (712 aa).

At Ser-73 the chain carries Phosphoserine. Zn(2+) is bound at residue His-501. Residue Glu-502 is part of the active site. Zn(2+)-binding residues include His-505 and His-508.

This sequence belongs to the peptidase M3 family. Requires Zn(2+) as cofactor.

It localises to the cytoplasm. It carries out the reaction Cleavage of Pro-|-Phe and Ala-|-Ala bonds.. Functionally, could be involved in late stage of protein degradation. The chain is Saccharolysin (PRD1) from Saccharomyces cerevisiae (strain ATCC 204508 / S288c) (Baker's yeast).